The primary structure comprises 121 residues: Flagellar protein FliT (121 aa).

Residues 1–50 (MNHAPHLYFAWQQLVDKSQLMLRLATEEQWDELIASEMAYVNAVQEIAHL) are required for homodimerization. The interval 60 to 98 (MQEQLRPMLRLILDNESKVKQLLQIRMDELAKLVGQSSV) is fliD binding.

The protein belongs to the FliT family. In terms of assembly, homodimer. Interacts with FliD and FlhC.

Its subcellular location is the cytoplasm. The protein localises to the cytosol. In terms of biological role, dual-function protein that regulates the transcription of class 2 flagellar operons and that also acts as an export chaperone for the filament-capping protein FliD. As a transcriptional regulator, acts as an anti-FlhDC factor; it directly binds FlhC, thus inhibiting the binding of the FlhC/FlhD complex to class 2 promoters, resulting in decreased expression of class 2 flagellar operons. As a chaperone, effects FliD transition to the membrane by preventing its premature polymerization, and by directing it to the export apparatus. The polypeptide is Flagellar protein FliT (Shigella sonnei (strain Ss046)).